Here is a 378-residue protein sequence, read N- to C-terminus: Glutamate 5-kinase (378 aa).

Position 20 (Lys20) interacts with ATP. Residues Ser60, Asp147, and Asn159 each contribute to the substrate site. ATP is bound by residues 179-180 (TD) and 221-227 (TGGMLTK). In terms of domain architecture, PUA spans 286–364 (RGRVVLDDGA…SQIARILGSM (79 aa)).

This sequence belongs to the glutamate 5-kinase family.

Its subcellular location is the cytoplasm. The enzyme catalyses L-glutamate + ATP = L-glutamyl 5-phosphate + ADP. It participates in amino-acid biosynthesis; L-proline biosynthesis; L-glutamate 5-semialdehyde from L-glutamate: step 1/2. Functionally, catalyzes the transfer of a phosphate group to glutamate to form L-glutamate 5-phosphate. This Bordetella pertussis (strain Tohama I / ATCC BAA-589 / NCTC 13251) protein is Glutamate 5-kinase.